The sequence spans 666 residues: DNA-directed RNA polymerase III subunit rpc3 (666 aa).

2 disordered regions span residues 130-153 (HEPHANGNSNETNGATNGNGVHSY) and 375-455 (SRLD…TESR). The segment covering 135-153 (NGNSNETNGATNGNGVHSY) has biased composition (polar residues). Residues 593 to 614 (TYKAMSRCLQRLDVEKRRKANI) form a leucine-zipper region.

The protein belongs to the RNA polymerase beta chain family. As to quaternary structure, component of the RNA polymerase III (Pol III) complex consisting of 17 subunits.

It localises to the nucleus. DNA-dependent RNA polymerase catalyzes the transcription of DNA into RNA using the four ribonucleoside triphosphates as substrates. Specific core component of RNA polymerase III which synthesizes small RNAs, such as 5S rRNA and tRNAs. This chain is DNA-directed RNA polymerase III subunit rpc3 (rpc82), found in Botryotinia fuckeliana (strain B05.10) (Noble rot fungus).